The sequence spans 296 residues: Syntenin-2 (296 aa).

PDZ domains lie at 112–191 (EIHL…VRDR) and 196–271 (TVTM…IPTV).

In terms of assembly, monomer and homodimer. Interacts with SDCBP. Interacts with TM4SF1.

The protein localises to the cytoplasm. It localises to the nucleus. Its subcellular location is the nucleolus. It is found in the nucleoplasm. The protein resides in the cell membrane. The protein localises to the nucleus speckle. In terms of biological role, binds phosphatidylinositol 4,5-bisphosphate (PIP2). May play a role in the organization of nuclear PIP2, cell division and cell survival. The protein is Syntenin-2 (Sdcbp2) of Rattus norvegicus (Rat).